Reading from the N-terminus, the 210-residue chain is Large ribosomal subunit protein bL25 (210 aa).

Positions 191 to 210 are disordered; it reads KPAPKAAETDEDGEEAASEE. Residues 199–210 show a composition bias toward acidic residues; that stretch reads TDEDGEEAASEE.

Belongs to the bacterial ribosomal protein bL25 family. CTC subfamily. In terms of assembly, part of the 50S ribosomal subunit; part of the 5S rRNA/L5/L18/L25 subcomplex. Contacts the 5S rRNA. Binds to the 5S rRNA independently of L5 and L18.

In terms of biological role, this is one of the proteins that binds to the 5S RNA in the ribosome where it forms part of the central protuberance. The polypeptide is Large ribosomal subunit protein bL25 (Alteromonas mediterranea (strain DSM 17117 / CIP 110805 / LMG 28347 / Deep ecotype)).